The following is a 110-amino-acid chain: uncharacterized protein (110 aa).

A signal peptide spans 1-19 (MKYLVGCLCLAAICLSAGA). N101 carries N-linked (GlcNAc...) asparagine glycosylation.

In terms of tissue distribution, component of the acid-soluble and acid-insoluble organic matrix of prismatic shell layers (at protein level).

Its subcellular location is the secreted. This is an uncharacterized protein from Haliotis asinina (Donkey's ear abalone).